The primary structure comprises 86 residues: Mu-theraphotoxin-Hhn1b 3 (86 aa).

A signal peptide spans M1–A21. A propeptide spanning residues S22–R49 is cleaved from the precursor. Intrachain disulfides connect C51–C66, C58–C73, and C65–C80. I84 carries the post-translational modification Isoleucine amide.

Belongs to the neurotoxin 10 (Hwtx-1) family. 22 (Htx-4) subfamily. In terms of assembly, monomer. As to expression, expressed by the venom gland.

The protein resides in the secreted. Neurotoxin. Selectively blocks neuronal tetrodotoxin-sensitive voltage-gated sodium channels (Nav) with an IC(50) of 44.6 nM. Does not affect tetrodotoxin-resistant voltage-gated sodium channels or calcium channels. This is Mu-theraphotoxin-Hhn1b 3 from Cyriopagopus hainanus (Chinese bird spider).